We begin with the raw amino-acid sequence, 106 residues long: MIVLITGASSGFGWEAAKLCVAKGHRVIGCARRTERLQALQKELGDAFFPLPFDIADADALNAAFERLPEDWRAIDVLVNNAGLALGQAPAHESRLADWEQMIATN.

Position 4 to 28 (4 to 28 (LITGASSGFGWEAAKLCVAKGHRVI)) interacts with NADP(+).

This sequence belongs to the short-chain dehydrogenases/reductases (SDR) family.

In Dichelobacter nodosus (Bacteroides nodosus), this protein is Probable NADP-dependent dehydrogenase in aabA 3'region.